The sequence spans 412 residues: Peptide chain release factor subunit 1 (412 aa).

The protein belongs to the eukaryotic release factor 1 family. Heterodimer of two subunits, one of which binds GTP.

It localises to the cytoplasm. Directs the termination of nascent peptide synthesis (translation) in response to the termination codons UAA, UAG and UGA. The chain is Peptide chain release factor subunit 1 from Methanobrevibacter smithii (strain ATCC 35061 / DSM 861 / OCM 144 / PS).